The chain runs to 134 residues: Replication enhancer protein (134 aa).

This sequence belongs to the geminiviridae replication enhancer protein family. Homooligomer. Interacts with the replication-associated protein (REP). Interacts with host proliferating cell nuclear antigen (PCNA). Interacts with host retinoblastoma-related protein 1 (RBR1), and may thereby deregulate the host cell cycle. Oligomerization and interaction with PCNA are necessary for optimal replication enhancement.

Its function is as follows. Increases viral DNA accumulation. Enhances infectivity and symptom expression. This chain is Replication enhancer protein, found in Tomato yellow leaf curl Sardinia virus (TYLCSV).